The primary structure comprises 123 residues: Venom peptide MmKTx1 (123 aa).

The first 21 residues, 1 to 21, serve as a signal peptide directing secretion; the sequence is MSIKISAIALFMLSFTVFVNG.

It belongs to the scorpion La1-like peptide family. Contains 4 disulfide bonds. As to expression, expressed by the venom gland.

Its subcellular location is the secreted. The polypeptide is Venom peptide MmKTx1 (Olivierus martensii (Manchurian scorpion)).